The following is a 397-amino-acid chain: MYDLPDKRGHFGPYGGTFVAETLISALDELCKQYEYYRDDAEFQAEFFHELKHYVGRPSPIYHAKRWSEHLGGAQILLKREDLNHTGAHKVNNTVGQALLARRMGKGRIIAETGAGQHGVASATVAARYGMECVVYMGSEDVKRQATNVYRMKLLGATVIPVDSGSCTLKDALNEAMRDWVTNVSNTYYIIGTVAGPHPYPMMVRDFQAIIGNEARQQMREEYGRQPDALIACVGGGSNAIGLFYPYIDEENVRMIGVEAAGKGIDTHEHAATLVTGRPGVLHGNRTYLIQDENGQIIETHSISAGLDYPGVGPEHAWLKDCGRAEYVAVTDDEALAAFHALCRFEGIIPALESSHALAYAAKLAPTLNKDQLLLVNLSGRGDKDMATVAQQSGISL.

Lysine 90 carries the post-translational modification N6-(pyridoxal phosphate)lysine.

The protein belongs to the TrpB family. In terms of assembly, tetramer of two alpha and two beta chains. Pyridoxal 5'-phosphate is required as a cofactor.

It carries out the reaction (1S,2R)-1-C-(indol-3-yl)glycerol 3-phosphate + L-serine = D-glyceraldehyde 3-phosphate + L-tryptophan + H2O. Its pathway is amino-acid biosynthesis; L-tryptophan biosynthesis; L-tryptophan from chorismate: step 5/5. In terms of biological role, the beta subunit is responsible for the synthesis of L-tryptophan from indole and L-serine. This chain is Tryptophan synthase beta chain, found in Nitrosomonas europaea (strain ATCC 19718 / CIP 103999 / KCTC 2705 / NBRC 14298).